We begin with the raw amino-acid sequence, 191 residues long: Adenine phosphoribosyltransferase (191 aa).

It belongs to the purine/pyrimidine phosphoribosyltransferase family. As to quaternary structure, homodimer.

It localises to the cytoplasm. The catalysed reaction is AMP + diphosphate = 5-phospho-alpha-D-ribose 1-diphosphate + adenine. It participates in purine metabolism; AMP biosynthesis via salvage pathway; AMP from adenine: step 1/1. Catalyzes a salvage reaction resulting in the formation of AMP, that is energically less costly than de novo synthesis. The polypeptide is Adenine phosphoribosyltransferase (Nocardia farcinica (strain IFM 10152)).